The sequence spans 376 residues: UDP-N-acetylglucosamine--N-acetylmuramyl-(pentapeptide) pyrophosphoryl-undecaprenol N-acetylglucosamine transferase (376 aa).

UDP-N-acetyl-alpha-D-glucosamine is bound by residues 12–14, asparagine 125, arginine 165, serine 197, and glutamine 296; that span reads TGG.

The protein belongs to the glycosyltransferase 28 family. MurG subfamily.

It is found in the cell inner membrane. The catalysed reaction is di-trans,octa-cis-undecaprenyl diphospho-N-acetyl-alpha-D-muramoyl-L-alanyl-D-glutamyl-meso-2,6-diaminopimeloyl-D-alanyl-D-alanine + UDP-N-acetyl-alpha-D-glucosamine = di-trans,octa-cis-undecaprenyl diphospho-[N-acetyl-alpha-D-glucosaminyl-(1-&gt;4)]-N-acetyl-alpha-D-muramoyl-L-alanyl-D-glutamyl-meso-2,6-diaminopimeloyl-D-alanyl-D-alanine + UDP + H(+). Its pathway is cell wall biogenesis; peptidoglycan biosynthesis. In terms of biological role, cell wall formation. Catalyzes the transfer of a GlcNAc subunit on undecaprenyl-pyrophosphoryl-MurNAc-pentapeptide (lipid intermediate I) to form undecaprenyl-pyrophosphoryl-MurNAc-(pentapeptide)GlcNAc (lipid intermediate II). The polypeptide is UDP-N-acetylglucosamine--N-acetylmuramyl-(pentapeptide) pyrophosphoryl-undecaprenol N-acetylglucosamine transferase (Protochlamydia amoebophila (strain UWE25)).